A 188-amino-acid chain; its full sequence is GMP synthase [glutamine-hydrolyzing] subunit A (188 aa).

Residues 1–188 form the Glutamine amidotransferase type-1 domain; that stretch reads MIVIMDNGGQ…RNFAELCGEL (188 aa). The active-site Nucleophile is Cys-78. Catalysis depends on residues His-165 and Glu-167.

In terms of assembly, heterodimer composed of a glutamine amidotransferase subunit (A) and a GMP-binding subunit (B).

The enzyme catalyses XMP + L-glutamine + ATP + H2O = GMP + L-glutamate + AMP + diphosphate + 2 H(+). It functions in the pathway purine metabolism; GMP biosynthesis; GMP from XMP (L-Gln route): step 1/1. Its function is as follows. Catalyzes the synthesis of GMP from XMP. This chain is GMP synthase [glutamine-hydrolyzing] subunit A, found in Thermococcus kodakarensis (strain ATCC BAA-918 / JCM 12380 / KOD1) (Pyrococcus kodakaraensis (strain KOD1)).